Consider the following 72-residue polypeptide: Large ribosomal subunit protein bL31 (72 aa).

Residues Cys-16, Cys-18, Cys-38, and Cys-41 each contribute to the Zn(2+) site.

The protein belongs to the bacterial ribosomal protein bL31 family. Type A subfamily. In terms of assembly, part of the 50S ribosomal subunit. Zn(2+) is required as a cofactor.

Functionally, binds the 23S rRNA. In Beutenbergia cavernae (strain ATCC BAA-8 / DSM 12333 / CCUG 43141 / JCM 11478 / NBRC 16432 / NCIMB 13614 / HKI 0122), this protein is Large ribosomal subunit protein bL31.